The chain runs to 282 residues: uncharacterized protein (282 aa).

Disordered regions lie at residues 1 to 45 (MPLE…EEDE) and 201 to 259 (DRRR…KPWG). Residues 10 to 19 (SEMKEFKEST) are compositionally biased toward basic and acidic residues. A compositionally biased stretch (polar residues) spans 26-38 (SVSSEETLTQSMV). Over residues 201 to 237 (DRRRKEDSKARSRLTRREEHSEHHRSGKSRRERERRS) the composition is skewed to basic and acidic residues.

This is an uncharacterized protein from Ostreid herpesvirus 1 (isolate France) (OsHV-1).